Here is a 315-residue protein sequence, read N- to C-terminus: Thioredoxin reductase (315 aa).

34-41 (EGQKVGGQ) lines the FAD pocket. Cys-134 and Cys-137 are joined by a disulfide. Residue 282–291 (DIRVKSLRQV) coordinates FAD.

It belongs to the class-II pyridine nucleotide-disulfide oxidoreductase family. As to quaternary structure, homodimer. Requires FAD as cofactor.

The protein resides in the cytoplasm. It catalyses the reaction [thioredoxin]-dithiol + NADP(+) = [thioredoxin]-disulfide + NADPH + H(+). The sequence is that of Thioredoxin reductase (trxB) from Peptoclostridium acidaminophilum (Eubacterium acidaminophilum).